The following is a 249-amino-acid chain: 5'-nucleotidase SurE (249 aa).

A divalent metal cation contacts are provided by D8, D9, S39, and N91.

The protein belongs to the SurE nucleotidase family. A divalent metal cation serves as cofactor.

It is found in the cytoplasm. It catalyses the reaction a ribonucleoside 5'-phosphate + H2O = a ribonucleoside + phosphate. Its function is as follows. Nucleotidase that shows phosphatase activity on nucleoside 5'-monophosphates. In Pseudomonas paraeruginosa (strain DSM 24068 / PA7) (Pseudomonas aeruginosa (strain PA7)), this protein is 5'-nucleotidase SurE.